Consider the following 500-residue polypeptide: Formate-nitrite transporter 3 (500 aa).

The Cytoplasmic portion of the chain corresponds to 1–31 (MVLAASPEAYRKVIEYGIKKTKLRIDRLFLQ). A helical membrane pass occupies residues 32 to 52 (AIMAGIYVGMAGHACTALAGA). At 53-69 (YSTDPANPLAVSKATQK) the chain is on the extracellular side. Residues 70–90 (FLYASLFPVAFIAIIFTGAEL) form a helical membrane-spanning segment. Residues 91 to 113 (FTGNTMTMLVCLLERRVTALQLC) lie on the Cytoplasmic side of the membrane. The chain crosses the membrane as a helical span at residues 114-134 (INWICSLVGNWAGALFAAYFL). The Extracellular portion of the chain corresponds to 135-164 (SYLPGVLQDPDHLHYLEDVAAHKTELSFLQ). Residues 165 to 185 (CFCLAVGCNTFVCLAVWFVIA) form a helical membrane-spanning segment. Over 186–192 (SDDAAGK) the chain is Cytoplasmic. A helical transmembrane segment spans residues 193 to 213 (IMSMWFPIVSFCVAGYEHIIA). Over 214 to 237 (NFYTLQCALMHGVGPGVGTVILKN) the chain is Extracellular. A helical transmembrane segment spans residues 238–258 (FIPTLLGNIVGGCGLVGAVYW). The Cytoplasmic portion of the chain corresponds to 259-500 (YNFYPTVCVV…ALEEHPASTI (242 aa)). The disordered stretch occupies residues 411 to 500 (PLRENSGVPS…ALEEHPASTI (90 aa)). Composition is skewed to basic and acidic residues over residues 428–444 (GRVRRSSREREPERGGE) and 466–485 (FHPHVPREVEQSSLLEETRV).

The protein belongs to the FNT transporter (TC 1.A.16) family. In terms of assembly, homopentamer.

The protein resides in the cell membrane. It carries out the reaction (S)-lactate(in) + H(+)(in) = (S)-lactate(out) + H(+)(out). It catalyses the reaction formate(in) + H(+)(in) = formate(out) + H(+)(out). The enzyme catalyses pyruvate(out) + H(+)(out) = pyruvate(in) + H(+)(in). The catalysed reaction is acetate(out) + H(+)(out) = acetate(in) + H(+)(in). With respect to regulation, inhibited by p-chloromercuribenzene sulfonate (pCMBS). Methyl methanethiosulfonate (MMTS) inhibits L-lactate but not formate transport. Inhibited by the Malaria Box compound MMV007839. Inhibited by BH-296, BH-317, BH-326 and BH-388 compounds. Its function is as follows. Monocarboxylate-proton symporter; active in acidic-to-neutral pH range. Transports L-lactate and formate. In Toxoplasma gondii (strain ATCC 50611 / Me49), this protein is Formate-nitrite transporter 3.